A 409-amino-acid chain; its full sequence is MPFRRTLLAASLVLLITGQAPLYAAPPLSMDNGTNALTVQNSNAWVEVSASALQHNIRTLQAELAGKSRLCAVLKADAYGHGIGLVMPSIIAQGVPCVAVASNEEARVVRASGFTGQLVRVRAASLSELEDALQYDMEELVGSAEFARQADAIAARHGKTLRIHLAFNSSGMSRNGVEMATWSGRGEALQITDQKHLELVALMTHFAVEDKDDVRKGLAAFNEQTDWLIKHARLDRSKLTLHAANSFATLEVPEARLDMVRTGGALFGDTVPGRTEYKRAMQFKSRVAAVHSYPAGNTVGYDRTFTLARDSRLANITVGYSDGYRRVFTNKGHVLINGHRVPVVGKVSMNTLMVDVTDFPDVKGGNEVVLFGKQAGGEITQAEMEEINGALLADLYTVWGSSNPKILVD.

An N-terminal signal peptide occupies residues 1–24 (MPFRRTLLAASLVLLITGQAPLYA). C71 and C97 form a disulfide bridge. The Proton acceptor role is filled by K75. At K75 the chain carries N6-(pyridoxal phosphate)lysine. Residue R174 coordinates substrate. The Proton acceptor role is filled by Y301. M349 is a binding site for substrate.

The protein belongs to the alanine racemase family. Bsr subfamily. Monomer. Forms a head-to-tail homodimer in the structure. Pyridoxal 5'-phosphate serves as cofactor.

The protein localises to the periplasm. The catalysed reaction is an L-alpha-amino acid = a D-alpha-amino acid. It carries out the reaction L-lysine = D-lysine. The enzyme catalyses L-arginine = D-arginine. It catalyses the reaction L-alanine = D-alanine. With respect to regulation, activity is enhanced by Co(2+), Mn(2+) and Sr(2+), and decreased by Cu(2+). Functionally, amino-acid racemase that catalyzes the interconversion of L-lysine and D-lysine, and L-arginine and D-arginine. To a lesser extent, is also able to interconvert alanine and isoleucine enantiomers. The sequence is that of Broad specificity amino-acid racemase from Pseudomonas putida (Arthrobacter siderocapsulatus).